We begin with the raw amino-acid sequence, 497 residues long: Cytochrome P450 2D6 (497 aa).

Asp301 is a substrate binding site. Cys443 is a binding site for heme.

It belongs to the cytochrome P450 family. Heme is required as a cofactor.

It is found in the endoplasmic reticulum membrane. Its subcellular location is the microsome membrane. It catalyses the reaction (5Z,8Z,11Z,14Z)-eicosatetraenoate + reduced [NADPH--hemoprotein reductase] + O2 = (8R,9S)-epoxy-(5Z,11Z,14Z)-eicosatrienoate + oxidized [NADPH--hemoprotein reductase] + H2O + H(+). The enzyme catalyses (5Z,8Z,11Z,14Z)-eicosatetraenoate + reduced [NADPH--hemoprotein reductase] + O2 = (11R,12S)-epoxy-(5Z,8Z,14Z)-eicosatrienoate + oxidized [NADPH--hemoprotein reductase] + H2O + H(+). It carries out the reaction (5Z,8Z,11Z,14Z)-eicosatetraenoate + reduced [NADPH--hemoprotein reductase] + O2 = (14S,15R)-epoxy-(5Z,8Z,11Z)-eicosatrienoate + oxidized [NADPH--hemoprotein reductase] + H2O + H(+). The catalysed reaction is N-(5Z,8Z,11Z,14Z-eicosatetraenoyl)-ethanolamine + reduced [NADPH--hemoprotein reductase] + O2 = N-(8,9-epoxy-5Z,11Z,14Z-eicosatrienoyl)-ethanolamine + oxidized [NADPH--hemoprotein reductase] + H2O + H(+). It catalyses the reaction N-(5Z,8Z,11Z,14Z-eicosatetraenoyl)-ethanolamine + reduced [NADPH--hemoprotein reductase] + O2 = N-(11,12-epoxy-5Z,8Z,14Z-eicosatrienoyl)-ethanolamine + oxidized [NADPH--hemoprotein reductase] + H2O + H(+). The enzyme catalyses N-(5Z,8Z,11Z,14Z-eicosatetraenoyl)-ethanolamine + reduced [NADPH--hemoprotein reductase] + O2 = N-(14,15-epoxy-5Z,8Z,11Z-eicosatrienoyl)-ethanolamine + oxidized [NADPH--hemoprotein reductase] + H2O + H(+). It carries out the reaction N-(5Z,8Z,11Z,14Z-eicosatetraenoyl)-ethanolamine + reduced [NADPH--hemoprotein reductase] + O2 = N-(20-hydroxy-5Z,8Z,11Z,14Z-eicosatetraenoyl)-ethanolamine + oxidized [NADPH--hemoprotein reductase] + H2O + H(+). The catalysed reaction is (5Z,8Z,11Z,14Z,17Z)-eicosapentaenoate + reduced [NADPH--hemoprotein reductase] + O2 = (17S,18R)-epoxy-(5Z,8Z,11Z,14Z)-eicosatetraenoate + oxidized [NADPH--hemoprotein reductase] + H2O + H(+). It catalyses the reaction (4Z,7Z,10Z,13Z,16Z,19Z)-docosahexaenoate + reduced [NADPH--hemoprotein reductase] + O2 = (19R,20S)-epoxy-(4Z,7Z,10Z,13Z,16Z)-docosapentaenoate + oxidized [NADPH--hemoprotein reductase] + H2O + H(+). The enzyme catalyses (4Z,7Z,10Z,13Z,16Z,19Z)-docosahexaenoate + reduced [NADPH--hemoprotein reductase] + O2 = (19S,20R)-epoxy-(4Z,7Z,10Z,13Z,16Z)-docosapentaenoate + oxidized [NADPH--hemoprotein reductase] + H2O + H(+). It carries out the reaction cholesterol + reduced [NADPH--hemoprotein reductase] + O2 = 25-hydroxycholesterol + oxidized [NADPH--hemoprotein reductase] + H2O + H(+). The catalysed reaction is all-trans-retinol + reduced [NADPH--hemoprotein reductase] + O2 = all-trans-retinal + oxidized [NADPH--hemoprotein reductase] + 2 H2O + H(+). The protein operates within cofactor metabolism; retinol metabolism. Its pathway is lipid metabolism; fatty acid metabolism. It participates in steroid metabolism; cholesterol metabolism. Functionally, a cytochrome P450 monooxygenase involved in the metabolism of fatty acids, steroids and retinoids. Mechanistically, uses molecular oxygen inserting one oxygen atom into a substrate, and reducing the second into a water molecule, with two electrons provided by NADPH via cytochrome P450 reductase (NADPH--hemoprotein reductase). Catalyzes the epoxidation of double bonds of polyunsaturated fatty acids (PUFA). Metabolizes endocannabinoid arachidonoylethanolamide (anandamide) to 20-hydroxyeicosatetraenoic acid ethanolamide (20-HETE-EA) and 8,9-, 11,12-, and 14,15-epoxyeicosatrienoic acid ethanolamides (EpETrE-EAs), potentially modulating endocannabinoid system signaling. Catalyzes the hydroxylation of carbon-hydrogen bonds. Metabolizes cholesterol toward 25-hydroxycholesterol, a physiological regulator of cellular cholesterol homeostasis. Catalyzes the oxidative transformations of all-trans retinol to all-trans retinal, a precursor for the active form all-trans-retinoic acid. Also involved in the oxidative metabolism of drugs such as antiarrhythmics, adrenoceptor antagonists, and tricyclic antidepressants. This Pan troglodytes (Chimpanzee) protein is Cytochrome P450 2D6 (CYP2D6).